The primary structure comprises 290 residues: ATP synthase gamma chain (290 aa).

Belongs to the ATPase gamma chain family. In terms of assembly, F-type ATPases have 2 components, CF(1) - the catalytic core - and CF(0) - the membrane proton channel. CF(1) has five subunits: alpha(3), beta(3), gamma(1), delta(1), epsilon(1). CF(0) has three main subunits: a, b and c.

It localises to the cell inner membrane. In terms of biological role, produces ATP from ADP in the presence of a proton gradient across the membrane. The gamma chain is believed to be important in regulating ATPase activity and the flow of protons through the CF(0) complex. The polypeptide is ATP synthase gamma chain (Paracoccus denitrificans (strain Pd 1222)).